Here is a 296-residue protein sequence, read N- to C-terminus: MKLAQGTVVGLIAGYYDVETATGIVRTRARGVFRQKKQKPAVGDRVEIQIDDKGMSYLVEILPRINRIGRPAVANVSHVLLVISAVEPDFSLELLDRFLTFFSWQKVNVTIYLSKADLISEQRLNEIKESLDYYQKIGYPVFIDYHHLEEKIGDMIKDNQIWTLAGQSGAGKSTLLNHLKKDANQTTGAISTSLNRGKHTTRKVELFKLGHGFLADTPGFSSIDLTPIKLNELCNYFIEFKRASKKCKFRGCQHIKEPGCEVKKLLEEGKILHSRYDDYLAMRTEINEGRMPEYLK.

One can recognise a CP-type G domain in the interval 65 to 223 (INRIGRPAVA…LADTPGFSSI (159 aa)). GTP-binding positions include 114-117 (SKAD) and 166-174 (GQSGAGKST). Cysteine 247, cysteine 252, histidine 254, and cysteine 260 together coordinate Zn(2+).

This sequence belongs to the TRAFAC class YlqF/YawG GTPase family. RsgA subfamily. In terms of assembly, monomer. Associates with 30S ribosomal subunit, binds 16S rRNA. Zn(2+) serves as cofactor.

It is found in the cytoplasm. Its function is as follows. One of several proteins that assist in the late maturation steps of the functional core of the 30S ribosomal subunit. Helps release RbfA from mature subunits. May play a role in the assembly of ribosomal proteins into the subunit. Circularly permuted GTPase that catalyzes slow GTP hydrolysis, GTPase activity is stimulated by the 30S ribosomal subunit. This Lactobacillus acidophilus (strain ATCC 700396 / NCK56 / N2 / NCFM) protein is Small ribosomal subunit biogenesis GTPase RsgA.